The following is a 312-amino-acid chain: UPF0725 protein At3g19520 (312 aa).

The protein belongs to the UPF0725 (EMB2204) family.

The protein is UPF0725 protein At3g19520 of Arabidopsis thaliana (Mouse-ear cress).